The sequence spans 367 residues: Phosphoribosylaminoimidazole-succinocarboxamide synthase (367 aa).

The protein belongs to the SAICAR synthetase family.

It catalyses the reaction 5-amino-1-(5-phospho-D-ribosyl)imidazole-4-carboxylate + L-aspartate + ATP = (2S)-2-[5-amino-1-(5-phospho-beta-D-ribosyl)imidazole-4-carboxamido]succinate + ADP + phosphate + 2 H(+). Its pathway is purine metabolism; IMP biosynthesis via de novo pathway; 5-amino-1-(5-phospho-D-ribosyl)imidazole-4-carboxamide from 5-amino-1-(5-phospho-D-ribosyl)imidazole-4-carboxylate: step 1/2. In Aliivibrio fischeri (strain ATCC 700601 / ES114) (Vibrio fischeri), this protein is Phosphoribosylaminoimidazole-succinocarboxamide synthase.